The sequence spans 263 residues: Zinc import ATP-binding protein ZnuC (263 aa).

The ABC transporter domain occupies 11–226 (VELKNINVVF…PTFIHFFGDQ (216 aa)). Residue 43 to 50 (GPNGGGKS) coordinates ATP.

This sequence belongs to the ABC transporter superfamily. Zinc importer (TC 3.A.1.15.5) family. The complex is composed of two ATP-binding proteins (ZnuC), two transmembrane proteins (ZnuB) and a solute-binding protein (ZnuA).

The protein localises to the cell inner membrane. It catalyses the reaction Zn(2+)(out) + ATP(in) + H2O(in) = Zn(2+)(in) + ADP(in) + phosphate(in) + H(+)(in). In terms of biological role, part of the ABC transporter complex ZnuABC involved in zinc import. Responsible for energy coupling to the transport system. In Pasteurella multocida (strain Pm70), this protein is Zinc import ATP-binding protein ZnuC.